The primary structure comprises 713 residues: Probable tRNA (uracil-O(2)-)-methyltransferase (713 aa).

Disordered stretches follow at residues threonine 49–threonine 92 and leucine 480–glycine 508. Serine 76 is subject to Phosphoserine. Residues glycine 79–arginine 89 show a composition bias toward basic and acidic residues. At serine 489 the chain carries Phosphoserine. The C3H1-type zinc finger occupies phenylalanine 669 to glutamate 698.

It belongs to the TRM44 family.

It is found in the cytoplasm. It catalyses the reaction uridine(44) in tRNA(Ser) + S-adenosyl-L-methionine = 2'-O-methyluridine(44) in tRNA(Ser) + S-adenosyl-L-homocysteine + H(+). Functionally, probable adenosyl-L-methionine (AdoMet)-dependent tRNA (uracil-O(2)-)-methyltransferase. This Mus musculus (Mouse) protein is Probable tRNA (uracil-O(2)-)-methyltransferase (Trmt44).